Here is a 206-residue protein sequence, read N- to C-terminus: Imidazole glycerol phosphate synthase subunit hisH (206 aa).

Positions 2–206 (KVGLVDYSMG…REVMKKAASL (205 aa)) constitute a Glutamine amidotransferase type-1 domain. C80 serves as the catalytic Nucleophile. Residues H184 and E186 contribute to the active site.

In terms of assembly, heterodimer of hisH and hisF.

It localises to the plastid. The protein resides in the chloroplast. It carries out the reaction 5-[(5-phospho-1-deoxy-D-ribulos-1-ylimino)methylamino]-1-(5-phospho-beta-D-ribosyl)imidazole-4-carboxamide + L-glutamine = D-erythro-1-(imidazol-4-yl)glycerol 3-phosphate + 5-amino-1-(5-phospho-beta-D-ribosyl)imidazole-4-carboxamide + L-glutamate + H(+). It catalyses the reaction L-glutamine + H2O = L-glutamate + NH4(+). The protein operates within amino-acid biosynthesis; L-histidine biosynthesis; L-histidine from 5-phospho-alpha-D-ribose 1-diphosphate: step 5/9. Its function is as follows. IGPS catalyzes the conversion of PRFAR and glutamine to IGP, AICAR and glutamate. The HisH subunit catalyzes the hydrolysis of glutamine to glutamate and ammonia as part of the synthesis of IGP and AICAR. The resulting ammonia molecule is channeled to the active site of HisF. This chain is Imidazole glycerol phosphate synthase subunit hisH, found in Cyanidioschyzon merolae (strain NIES-3377 / 10D) (Unicellular red alga).